We begin with the raw amino-acid sequence, 413 residues long: Alpha-1-antitrypsin-like protein CM55-SI (413 aa).

Residues 1–24 (MPSSISWGLLLLAALSCLGPGSLA) form the signal peptide. Glutamine 25 is subject to Pyrrolidone carboxylic acid. Residues asparagine 65, asparagine 102, asparagine 165, and asparagine 266 are each glycosylated (N-linked (GlcNAc...) asparagine). Positions 368–387 (GGTVLGNIRSILRYEVIFDR) are RCL.

Belongs to the serpin family. As to expression, expressed in liver.

This chain is Alpha-1-antitrypsin-like protein CM55-SI, found in Tamias sibiricus (Siberian chipmunk).